The chain runs to 906 residues: Cadherin-2 (906 aa).

Positions 1–25 (MCRIAGAPRTLLPLLAALLQASVEA) are cleaved as a signal peptide. Residues 26–159 (SGEIALCKTG…HNGYLQRQKR (134 aa)) constitute a propeptide that is removed on maturation. 2 positions are modified to phosphoserine: S96 and S135. 5 Cadherin domains span residues 160 to 267 (DWVI…RPEF), 268 to 382 (LHQV…PPEF), 383 to 497 (TAMT…NPYF), 498 to 603 (APNP…DNAP), and 604 to 714 (QVLP…DVDR). Residues 160–724 (DWVIPPINLP…IVGAGLGTGA (565 aa)) lie on the Extracellular side of the membrane. A Ca(2+)-binding site is contributed by E170. N-linked (GlcNAc...) asparagine glycosylation is present at N190. D226, E228, D259, M260, N261, D262, and N263 together coordinate Ca(2+). N-linked (GlcNAc...) asparagine glycosylation is present at N273. Ca(2+)-binding residues include D293, D295, and N301. The N-linked (GlcNAc...) asparagine glycan is linked to N325. A Ca(2+)-binding site is contributed by D353. Residues N402, N572, N622, N651, and N692 are each glycosylated (N-linked (GlcNAc...) asparagine). The helical transmembrane segment at 725 to 745 (IIAILLCIIILLILVLMFVVW) threads the bilayer. At 746–906 (MKRRDKERQA…LAEMYGGGDD (161 aa)) the chain is on the cytoplasmic side. Residues 863 to 880 (SGSTAGSLSSLNSSSSGG) show a composition bias toward low complexity. The segment at 863–884 (SGSTAGSLSSLNSSSSGGEQDY) is disordered.

In terms of assembly, homodimer (via extracellular region). Can also form heterodimers with other cadherins (via extracellular region). Dimerization occurs in trans, i.e. with a cadherin chain from another cell. Interacts with CDCP1. Interacts with PCDH8; this complex may also include TAOK2. The interaction with PCDH8 may lead to internalization through TAOK2/p38 MAPK pathway. Identified in a complex containing FGFR4, NCAM1, CDH2, PLCG1, FRS2, SRC, SHC1, GAP43 and CTTN. May interact with OBSCN (via protein kinase domain 2). Interacts with FBXO45. In terms of processing, cleaved by MMP24. Ectodomain cleavage leads to the generation of a soluble 90 kDa N-terminal soluble fragment and a 45 kDa membrane-bound C-terminal fragment 1 (CTF1), which is further cleaved by gamma-secretase into a 35 kDa. Cleavage in neural stem cells by MMP24 affects CDH2-mediated anchorage of neural stem cells to ependymocytes in the adult subependymal zone, leading to modulate neural stem cell quiescence. Post-translationally, may be phosphorylated by OBSCN.

The protein resides in the cell membrane. It is found in the sarcolemma. Its subcellular location is the cell junction. The protein localises to the cell surface. It localises to the desmosome. The protein resides in the adherens junction. Its function is as follows. Calcium-dependent cell adhesion protein; preferentially mediates homotypic cell-cell adhesion by dimerization with a CDH2 chain from another cell. Cadherins may thus contribute to the sorting of heterogeneous cell types. Acts as a regulator of neural stem cells quiescence by mediating anchorage of neural stem cells to ependymocytes in the adult subependymal zone: upon cleavage by MMP24, CDH2-mediated anchorage is affected, leading to modulate neural stem cell quiescence. Plays a role in cell-to-cell junction formation between pancreatic beta cells and neural crest stem (NCS) cells, promoting the formation of processes by NCS cells. Required for proper neurite branching. Required for pre- and postsynaptic organization. CDH2 may be involved in neuronal recognition mechanism. In hippocampal neurons, may regulate dendritic spine density. This is Cadherin-2 (CDH2) from Otolemur garnettii (Small-eared galago).